Reading from the N-terminus, the 476-residue chain is Siroheme synthase (476 aa).

Residues 1–207 form a precorrin-2 dehydrogenase /sirohydrochlorin ferrochelatase region; the sequence is MTANVLFPLF…QRHAEAEAVL (207 aa). Residues 25–26 and 46–47 each bind NAD(+); these read KV and PS. Residue Ser132 is modified to Phosphoserine. A uroporphyrinogen-III C-methyltransferase region spans residues 220 to 476; sequence GSVTLVGAGA…SAPCPPALIL (257 aa). Asp252 acts as the Proton acceptor in catalysis. Lys274 (proton donor) is an active-site residue. Residues 305-307, Val310, 335-336, Met387, and Gly416 contribute to the S-adenosyl-L-methionine site; these read GGD and TA.

In the N-terminal section; belongs to the precorrin-2 dehydrogenase / sirohydrochlorin ferrochelatase family. It in the C-terminal section; belongs to the precorrin methyltransferase family.

It carries out the reaction uroporphyrinogen III + 2 S-adenosyl-L-methionine = precorrin-2 + 2 S-adenosyl-L-homocysteine + H(+). It catalyses the reaction precorrin-2 + NAD(+) = sirohydrochlorin + NADH + 2 H(+). The enzyme catalyses siroheme + 2 H(+) = sirohydrochlorin + Fe(2+). It functions in the pathway cofactor biosynthesis; adenosylcobalamin biosynthesis; precorrin-2 from uroporphyrinogen III: step 1/1. Its pathway is cofactor biosynthesis; adenosylcobalamin biosynthesis; sirohydrochlorin from precorrin-2: step 1/1. It participates in porphyrin-containing compound metabolism; siroheme biosynthesis; precorrin-2 from uroporphyrinogen III: step 1/1. The protein operates within porphyrin-containing compound metabolism; siroheme biosynthesis; siroheme from sirohydrochlorin: step 1/1. It functions in the pathway porphyrin-containing compound metabolism; siroheme biosynthesis; sirohydrochlorin from precorrin-2: step 1/1. Its function is as follows. Multifunctional enzyme that catalyzes the SAM-dependent methylations of uroporphyrinogen III at position C-2 and C-7 to form precorrin-2 via precorrin-1. Then it catalyzes the NAD-dependent ring dehydrogenation of precorrin-2 to yield sirohydrochlorin. Finally, it catalyzes the ferrochelation of sirohydrochlorin to yield siroheme. The polypeptide is Siroheme synthase (Xylella fastidiosa (strain 9a5c)).